The chain runs to 353 residues: Thiamine-phosphate synthase (353 aa).

Residues 1–128 form a unknown region; that stretch reads MELMVVEADA…ASTAAEIRYG (128 aa). The segment at 129-353 is thiamine-phosphate synthase; it reads LYDLEVRILE…ASRTLLQTLA (225 aa). 4-amino-2-methyl-5-(diphosphooxymethyl)pyrimidine is bound by residues 185–189 and asparagine 217; that span reads QYRRK. Aspartate 218 and aspartate 237 together coordinate Mg(2+). Serine 256 serves as a coordination point for 4-amino-2-methyl-5-(diphosphooxymethyl)pyrimidine. Position 282–284 (282–284) interacts with 2-[(2R,5Z)-2-carboxy-4-methylthiazol-5(2H)-ylidene]ethyl phosphate; it reads TKT. A 4-amino-2-methyl-5-(diphosphooxymethyl)pyrimidine-binding site is contributed by lysine 285. Glycine 312 contributes to the 2-[(2R,5Z)-2-carboxy-4-methylthiazol-5(2H)-ylidene]ethyl phosphate binding site.

Belongs to the thiamine-phosphate synthase family. It depends on Mg(2+) as a cofactor.

The catalysed reaction is 2-[(2R,5Z)-2-carboxy-4-methylthiazol-5(2H)-ylidene]ethyl phosphate + 4-amino-2-methyl-5-(diphosphooxymethyl)pyrimidine + 2 H(+) = thiamine phosphate + CO2 + diphosphate. It carries out the reaction 2-(2-carboxy-4-methylthiazol-5-yl)ethyl phosphate + 4-amino-2-methyl-5-(diphosphooxymethyl)pyrimidine + 2 H(+) = thiamine phosphate + CO2 + diphosphate. It catalyses the reaction 4-methyl-5-(2-phosphooxyethyl)-thiazole + 4-amino-2-methyl-5-(diphosphooxymethyl)pyrimidine + H(+) = thiamine phosphate + diphosphate. The protein operates within cofactor biosynthesis; thiamine diphosphate biosynthesis; thiamine phosphate from 4-amino-2-methyl-5-diphosphomethylpyrimidine and 4-methyl-5-(2-phosphoethyl)-thiazole: step 1/1. Functionally, condenses 4-methyl-5-(beta-hydroxyethyl)thiazole monophosphate (THZ-P) and 2-methyl-4-amino-5-hydroxymethyl pyrimidine pyrophosphate (HMP-PP) to form thiamine monophosphate (TMP). This Synechococcus sp. (strain CC9311) protein is Thiamine-phosphate synthase.